The sequence spans 305 residues: Putative lipid kinase USA300HOU_0749 (305 aa).

A DAGKc domain is found at 3 to 139 (NKYTHGVLFY…YDVIKINNQY (137 aa)). ATP contacts are provided by residues S44, 74–80 (GDGTVNE), and T101. Residues S220, D223, and E225 each contribute to the Mg(2+) site. Residue E281 is the Proton acceptor of the active site.

It belongs to the diacylglycerol/lipid kinase family. It depends on Mg(2+) as a cofactor.

In terms of biological role, may catalyze the ATP-dependent phosphorylation of lipids other than diacylglycerol (DAG). The polypeptide is Putative lipid kinase USA300HOU_0749 (Staphylococcus aureus (strain USA300 / TCH1516)).